A 532-amino-acid chain; its full sequence is Tegument protein UL21 (532 aa).

The interval 251-276 (SPSVSSAPPPSAPDASLPPPGLQEAA) is disordered. The span at 257–276 (APPPSAPDASLPPPGLQEAA) shows a compositional bias: pro residues.

Belongs to the alphaherpesvirinae UL21 protein family. In terms of assembly, interacts (via C-terminus) with UL16.

The protein localises to the virion tegument. It is found in the host cytoplasm. It localises to the host nucleus. Functionally, may participate in DNA packaging/capsid maturation events. Promotes efficient incorporation of tegument proteins UL46, UL49, and US3 into virions. May also play a role in capsid transport to the trans-Golgi network (TGN). In Human herpesvirus 2 (strain HG52) (HHV-2), this protein is Tegument protein UL21.